A 525-amino-acid polypeptide reads, in one-letter code: NADH-quinone oxidoreductase subunit N (525 aa).

Transmembrane regions (helical) follow at residues 26 to 46 (LSPMLILFGVALAGVLVDAFA), 53 to 73 (VLQPLLAGAGFIGAFVAVVLL), 90 to 110 (PTLFLQGTILVFALLSVLLVA), 143 to 163 (VQTEAYPLMVFSVSGMLLFVA), 167 to 187 (LLVMFVALEILSLPLYLLCGL), 202 to 222 (YFLLGAFSSAFFLYGVAFAYG), 246 to 266 (LYLSLALLGVGLFFKIGAAPF), 278 to 298 (PTPITAFMAAGTKVAAFGALL), 314 to 334 (PVIWAVAILTMVVGAVLALTQ), 341 to 361 (LAYSAVAHAGFLLVGMAGSNI), 368 to 388 (MFYLVTYGFTTIAAFAVVSLV), 411 to 431 (LAGTFAFLLLALAGIPLTSGF), 449 to 469 (LVVVALVCSAIAAFFYVRVIV), and 487 to 507 (PTLTFATVGIGALMTLLLGVA).

The protein belongs to the complex I subunit 2 family. In terms of assembly, NDH-1 is composed of 14 different subunits. Subunits NuoA, H, J, K, L, M, N constitute the membrane sector of the complex.

The protein resides in the cell membrane. The enzyme catalyses a quinone + NADH + 5 H(+)(in) = a quinol + NAD(+) + 4 H(+)(out). Its function is as follows. NDH-1 shuttles electrons from NADH, via FMN and iron-sulfur (Fe-S) centers, to quinones in the respiratory chain. The immediate electron acceptor for the enzyme in this species is believed to be a menaquinone. Couples the redox reaction to proton translocation (for every two electrons transferred, four hydrogen ions are translocated across the cytoplasmic membrane), and thus conserves the redox energy in a proton gradient. This chain is NADH-quinone oxidoreductase subunit N, found in Parafrankia sp. (strain EAN1pec).